Here is a 251-residue protein sequence, read N- to C-terminus: Regulator of G-protein signaling 9-binding protein C (251 aa).

Topologically, residues 1–230 (MPLQNVKVAD…NSKGCCSDGQ (230 aa)) are cytoplasmic. Coiled-coil stretches lie at residues 53–94 (LRDE…ELER) and 158–187 (ANKA…MKVN). The helical; Anchor for type IV membrane protein transmembrane segment at 231-250 (LIVSLLLCGTALVAITLYSI) threads the bilayer. Position 251 (Leu251) is a topological domain, extracellular.

It belongs to the RGS7BP/RGS9BP family.

It localises to the membrane. Its function is as follows. Regulator of G protein-coupled receptor (GPCR) signaling. Probably acts by regulating the activity of some 'R7' family protein (RGS6, RGS7, RGS9 and/or RGS11). The sequence is that of Regulator of G-protein signaling 9-binding protein C (rgs9bp-c) from Xenopus laevis (African clawed frog).